Here is a 480-residue protein sequence, read N- to C-terminus: Probable histone deacetylase 1-B (480 aa).

The segment at 10–321 (KVCYYYDGDV…WTYETAVALD (312 aa)) is histone deacetylase. Residue His-141 is part of the active site. Residues 387–480 (DSVHDDSGEE…KRVKEETKSV (94 aa)) are disordered. Residues 401–416 (PDKRISIRSSDKRIAC) show a composition bias toward basic and acidic residues. The segment covering 417-427 (DEEFSDSEDEG) has biased composition (acidic residues). Positions 443–480 (VKTEEEKEGEDKKDVKEEEKAKDEKTDSKRVKEETKSV) are enriched in basic and acidic residues.

This sequence belongs to the histone deacetylase family. HD type 1 subfamily. In terms of assembly, found in a large complex with RBBP4 and MI-2.

Its subcellular location is the nucleus. It localises to the cytoplasm. It carries out the reaction N(6)-acetyl-L-lysyl-[histone] + H2O = L-lysyl-[histone] + acetate. The catalysed reaction is N(6)-acetyl-L-lysyl-[protein] + H2O = L-lysyl-[protein] + acetate. It catalyses the reaction N(6)-(2E)-butenoyl-L-lysyl-[protein] + H2O = (2E)-2-butenoate + L-lysyl-[protein]. Functionally, histone deacetylase that catalyzes the deacetylation of lysine residues on the N-terminal part of the core histones (H2A, H2B, H3 and H4). Histone deacetylation gives a tag for epigenetic repression and plays an important role in transcriptional regulation, cell cycle progression and developmental events. Histone deacetylases act via the formation of large multiprotein complexes. Also functions as a deacetylase for non-histone proteins. In addition to protein deacetylase activity, also has protein-lysine deacylase activity: acts as a protein decrotonylase by mediating decrotonylation ((2E)-butenoyl) of histones. In Xenopus laevis (African clawed frog), this protein is Probable histone deacetylase 1-B (hdac1-b).